The sequence spans 297 residues: Transmembrane protein 169 (297 aa).

The interval 1–85 is disordered; it reads MEEPTAVEGQ…KEEEGDDFLD (85 aa). Topologically, residues 1–159 are extracellular; the sequence is MEEPTAVEGQ…CQMGADRGPH (159 aa). A compositionally biased stretch (acidic residues) spans 61 to 85; the sequence is KTDEEPGESEGGDQPKEEEGDDFLD. A helical transmembrane segment spans residues 160-180; it reads VVLWTLICLPVVFILSFVVSF. The Cytoplasmic segment spans residues 181–210; it reads YYGTITWYNIFLVYNEERTFWHKISYCPCL. Residues 211–231 traverse the membrane as a helical segment; that stretch reads VLFYPVLIMAMASSLGLYAAV. At 232–297 the chain is on the extracellular side; sequence VQLSWSWEAW…PIQEVETSTV (66 aa).

The protein resides in the membrane. The chain is Transmembrane protein 169 (TMEM169) from Homo sapiens (Human).